The chain runs to 227 residues: Protein SSO0193 (227 aa).

Residues E15–I209 form the AMMECR1 domain.

The polypeptide is Protein SSO0193 (Saccharolobus solfataricus (strain ATCC 35092 / DSM 1617 / JCM 11322 / P2) (Sulfolobus solfataricus)).